Here is a 111-residue protein sequence, read N- to C-terminus: Dormancy-associated protein 1 (111 aa).

Residues 30 to 60 are disordered; the sequence is KDDGASNQLMRSTSIPTTPTTPVTPTTPSSA. Residues 41 to 59 show a composition bias toward low complexity; the sequence is STSIPTTPTTPVTPTTPSS.

Belongs to the DRM1/ARP family. In terms of tissue distribution, expressed in axilary buds and in non-growing stems and roots. Detected in sepals, stamens and carpels, but barely detected in petals or leaflets.

This chain is Dormancy-associated protein 1, found in Pisum sativum (Garden pea).